The following is a 171-amino-acid chain: Small ribosomal subunit protein mS41 (171 aa).

Residues 1–23 constitute a mitochondrion transit peptide; the sequence is MSLFKSLVARSGSGIRAAQIARQ. Positions 122 to 141 are disordered; sequence REHKKGKKKNGGERNAKTVL.

It belongs to the mitochondrion-specific ribosomal protein mS41 family.

It is found in the mitochondrion. Involved in telomere length regulation. The chain is Small ribosomal subunit protein mS41 (FYV4) from Scheffersomyces stipitis (strain ATCC 58785 / CBS 6054 / NBRC 10063 / NRRL Y-11545) (Yeast).